Here is a 215-residue protein sequence, read N- to C-terminus: Cytochrome b6 (215 aa).

Residues 32–52 (IFYCLGGITLTCFLVQVATGF) form a helical membrane-spanning segment. Residue C35 coordinates heme c. The heme b site is built by H86 and H100. The next 3 membrane-spanning stretches (helical) occupy residues 90–110 (ASMMVLMMILHVFRVYLTGGF), 116–136 (LTWVTGVVLGVLTASFGVTGY), and 186–206 (LHTFVLPLLTAVFMLMHFLMI). 2 residues coordinate heme b: H187 and H202.

It belongs to the cytochrome b family. PetB subfamily. In terms of assembly, the 4 large subunits of the cytochrome b6-f complex are cytochrome b6, subunit IV (17 kDa polypeptide, PetD), cytochrome f and the Rieske protein, while the 4 small subunits are PetG, PetL, PetM and PetN. The complex functions as a dimer. Requires heme b as cofactor. Heme c is required as a cofactor.

The protein resides in the plastid. The protein localises to the chloroplast thylakoid membrane. In terms of biological role, component of the cytochrome b6-f complex, which mediates electron transfer between photosystem II (PSII) and photosystem I (PSI), cyclic electron flow around PSI, and state transitions. This chain is Cytochrome b6, found in Arabidopsis thaliana (Mouse-ear cress).